The primary structure comprises 899 residues: Alanine--tRNA ligase, chloroplastic/mitochondrial (899 aa).

Residues H581, H585, C683, and H687 each contribute to the Zn(2+) site.

The protein belongs to the class-II aminoacyl-tRNA synthetase family. In terms of assembly, monomer. Requires Zn(2+) as cofactor.

It is found in the plastid. The protein localises to the chloroplast. Its subcellular location is the mitochondrion. The catalysed reaction is tRNA(Ala) + L-alanine + ATP = L-alanyl-tRNA(Ala) + AMP + diphosphate. Catalyzes the attachment of alanine to tRNA(Ala) in a two-step reaction: alanine is first activated by ATP to form Ala-AMP and then transferred to the acceptor end of tRNA(Ala). Also edits incorrectly charged tRNA(Ala) via its editing domain. The protein is Alanine--tRNA ligase, chloroplastic/mitochondrial of Micromonas pusilla (strain CCMP1545) (Picoplanktonic green alga).